A 253-amino-acid chain; its full sequence is 3-deoxy-manno-octulosonate cytidylyltransferase (253 aa).

It belongs to the KdsB family.

It localises to the cytoplasm. The enzyme catalyses 3-deoxy-alpha-D-manno-oct-2-ulosonate + CTP = CMP-3-deoxy-beta-D-manno-octulosonate + diphosphate. The protein operates within nucleotide-sugar biosynthesis; CMP-3-deoxy-D-manno-octulosonate biosynthesis; CMP-3-deoxy-D-manno-octulosonate from 3-deoxy-D-manno-octulosonate and CTP: step 1/1. It participates in bacterial outer membrane biogenesis; lipopolysaccharide biosynthesis. Its function is as follows. Activates KDO (a required 8-carbon sugar) for incorporation into bacterial lipopolysaccharide in Gram-negative bacteria. This is 3-deoxy-manno-octulosonate cytidylyltransferase from Neisseria meningitidis serogroup A / serotype 4A (strain DSM 15465 / Z2491).